The sequence spans 481 residues: MADGNTPHVAIIPSPGIGHLIPLVELAKRLLDNHGFTVTFIIPGDSPPSKAQRSVLNSLPSSIASVFLPPADLSDVPSTARIETRISLTVTRSNPALRELFGSLSAEKRLPAVLVVDLFGTDAFDVAAEFHVSPYIFYASNANVLTFLLHLPKLDETVSCEFRELTEPVIIPGCVPITGKDFVDPCQDRKDESYKWLLHNVKRFKEAEGILVNSFVDLEPNTIKIVQEPAPDKPPVYLIGPLVNSGSHDADVNDEYKCLNWLDNQPFGSVLYVSFGSGGTLTFEQFIELALGLAESGKRFLWVIRSPSGIASSSYFNPQSRNDPFSFLPQGFLDRTKEKGLVVGSWAPQAQILTHTSIGGFLTHCGWNSSLESIVNGVPLIAWPLYAEQKMNALLLVDVGAALRARLGEDGVVGREEVARVVKGLIEGEEGNAVRKKMKELKEGSVRVLRDDGFSTKSLNEVSLKWKAHQRKIDQEQESFL.

Residues S277, 347–349 (APQ), 364–372 (HCGWNSSLE), and 386–389 (YAEQ) contribute to the UDP-alpha-D-glucose site.

Belongs to the UDP-glycosyltransferase family.

In terms of biological role, possesses low quercetin 3-O-glucosyltransferase activity in vitro. The protein is UDP-glycosyltransferase 72B3 (UGT72B3) of Arabidopsis thaliana (Mouse-ear cress).